Here is a 510-residue protein sequence, read N- to C-terminus: Ent-sandaracopimaradiene 3-hydroxylase (510 aa).

The helical transmembrane segment at 4 to 24 (MLVAGAGAAAVAAVGGLVAAA) threads the bilayer. A heme-binding site is contributed by Cys-454.

It belongs to the cytochrome P450 family. As to quaternary structure, interacts with the rice dwarf virus (RDV) P2 protein. Heme serves as cofactor. Expressed in leaf blades and sheaths, stems and panicles.

Its subcellular location is the membrane. It catalyses the reaction ent-sandaracopimara-8(14),15-diene + reduced [NADPH--hemoprotein reductase] + O2 = ent-sandaracopimaradien-3beta-ol + oxidized [NADPH--hemoprotein reductase] + H2O + H(+). The enzyme catalyses 9beta-pimara-7,15-diene + reduced [NADPH--hemoprotein reductase] + O2 = 9beta-pimara-7,15-diene-3beta-ol + oxidized [NADPH--hemoprotein reductase] + H2O + H(+). Its function is as follows. Catalyzes the hydroxylation of ent-sandaracopimaradiene at the C3alpha position to produce ent-3beta-hydroxy-sandaracopimaradiene, an intermediates for the biosynthesis of oryzalexin D and oryzalexin E phytoalexins. Catalyzes the hydroxylation of ent-cassadiene at the C3alpha position to produce 3alpha-hydroxy-ent-cassadiene, which may be an intermediate for the biosynthesis of phytocassane phytoalexins. Catalyzes the hydroxylation of syn-pimaradiene (9-beta-pimara-7,15-diene) at the C3beta position to produce 3-beta-syn-pimaradiene. Can hydroxylate ent-kaurene in vitro, but the product is not ent-kauren-19-ol as expected for ent-kaurene oxidase activity. This chain is Ent-sandaracopimaradiene 3-hydroxylase, found in Oryza sativa subsp. japonica (Rice).